A 329-amino-acid polypeptide reads, in one-letter code: Urease accessory protein UreD 2 (329 aa).

Residues 100 to 120 (YSRPSDSSKFTNGTQSANSNT) are disordered. Over residues 103 to 120 (PSDSSKFTNGTQSANSNT) the composition is skewed to polar residues.

The protein belongs to the UreD family. UreD, UreF and UreG form a complex that acts as a GTP-hydrolysis-dependent molecular chaperone, activating the urease apoprotein by helping to assemble the nickel containing metallocenter of UreC. The UreE protein probably delivers the nickel.

The protein resides in the cytoplasm. Its function is as follows. Required for maturation of urease via the functional incorporation of the urease nickel metallocenter. This Psychrobacter cryohalolentis (strain ATCC BAA-1226 / DSM 17306 / VKM B-2378 / K5) protein is Urease accessory protein UreD 2.